The sequence spans 156 residues: Aspartate 1-decarboxylase (156 aa).

Residue Ser-29 is the Schiff-base intermediate with substrate; via pyruvic acid of the active site. Ser-29 is subject to Pyruvic acid (Ser). Position 61 (Thr-61) interacts with substrate. The active-site Proton donor is Tyr-62. 77 to 79 contacts substrate; it reads GAA.

The protein belongs to the PanD family. As to quaternary structure, heterooctamer of four alpha and four beta subunits. Pyruvate is required as a cofactor. In terms of processing, is synthesized initially as an inactive proenzyme, which is activated by self-cleavage at a specific serine bond to produce a beta-subunit with a hydroxyl group at its C-terminus and an alpha-subunit with a pyruvoyl group at its N-terminus.

Its subcellular location is the cytoplasm. The catalysed reaction is L-aspartate + H(+) = beta-alanine + CO2. It participates in cofactor biosynthesis; (R)-pantothenate biosynthesis; beta-alanine from L-aspartate: step 1/1. Its function is as follows. Catalyzes the pyruvoyl-dependent decarboxylation of aspartate to produce beta-alanine. This Rhodopirellula baltica (strain DSM 10527 / NCIMB 13988 / SH1) protein is Aspartate 1-decarboxylase.